The sequence spans 157 residues: Crossover junction endodeoxyribonuclease RuvC (157 aa).

Active-site residues include Asp7, Glu67, and Asp140. Residues Asp7, Glu67, and Asp140 each coordinate Mg(2+).

The protein belongs to the RuvC family. In terms of assembly, homodimer which binds Holliday junction (HJ) DNA. The HJ becomes 2-fold symmetrical on binding to RuvC with unstacked arms; it has a different conformation from HJ DNA in complex with RuvA. In the full resolvosome a probable DNA-RuvA(4)-RuvB(12)-RuvC(2) complex forms which resolves the HJ. Mg(2+) serves as cofactor.

The protein localises to the cytoplasm. The catalysed reaction is Endonucleolytic cleavage at a junction such as a reciprocal single-stranded crossover between two homologous DNA duplexes (Holliday junction).. In terms of biological role, the RuvA-RuvB-RuvC complex processes Holliday junction (HJ) DNA during genetic recombination and DNA repair. Endonuclease that resolves HJ intermediates. Cleaves cruciform DNA by making single-stranded nicks across the HJ at symmetrical positions within the homologous arms, yielding a 5'-phosphate and a 3'-hydroxyl group; requires a central core of homology in the junction. The consensus cleavage sequence is 5'-(A/T)TT(C/G)-3'. Cleavage occurs on the 3'-side of the TT dinucleotide at the point of strand exchange. HJ branch migration catalyzed by RuvA-RuvB allows RuvC to scan DNA until it finds its consensus sequence, where it cleaves and resolves the cruciform DNA. The polypeptide is Crossover junction endodeoxyribonuclease RuvC (Rickettsia akari (strain Hartford)).